The chain runs to 286 residues: General stress protein 39 (286 aa).

The tract at residues 1 to 26 (MANYPKELPAQTQSRQPGIESEMNPS) is disordered. 46-70 (LITGGDSGIGRAVSVAYAKEGADIA) provides a ligand contact to NAD(+). A substrate-binding site is contributed by S178. Residue Y191 is the Proton acceptor of the active site.

Belongs to the short-chain dehydrogenases/reductases (SDR) family.

In Bacillus subtilis (strain 168), this protein is General stress protein 39 (ydaD).